We begin with the raw amino-acid sequence, 616 residues long: Chaperone protein HscA (616 aa).

It belongs to the heat shock protein 70 family.

Functionally, chaperone involved in the maturation of iron-sulfur cluster-containing proteins. Has a low intrinsic ATPase activity which is markedly stimulated by HscB. Involved in the maturation of IscU. The sequence is that of Chaperone protein HscA from Pectobacterium carotovorum subsp. carotovorum (strain PC1).